Reading from the N-terminus, the 327-residue chain is UDP-N-acetylenolpyruvoylglucosamine reductase (327 aa).

Positions 42 to 223 (RTGGLAELFY…RAAMDEVALH (182 aa)) constitute an FAD-binding PCMH-type domain. Arginine 188 is an active-site residue. Serine 237 acts as the Proton donor in catalysis. Glutamate 307 is a catalytic residue.

This sequence belongs to the MurB family. The cofactor is FAD.

It is found in the cytoplasm. The enzyme catalyses UDP-N-acetyl-alpha-D-muramate + NADP(+) = UDP-N-acetyl-3-O-(1-carboxyvinyl)-alpha-D-glucosamine + NADPH + H(+). The protein operates within cell wall biogenesis; peptidoglycan biosynthesis. Its function is as follows. Cell wall formation. This is UDP-N-acetylenolpyruvoylglucosamine reductase from Bartonella tribocorum (strain CIP 105476 / IBS 506).